The sequence spans 399 residues: Formate-dependent phosphoribosylglycinamide formyltransferase (399 aa).

Residues 8 to 9 (EL) and Glu68 each bind N(1)-(5-phospho-beta-D-ribosyl)glycinamide. Residues Arg100, Lys141, 146-151 (SSGHGQ), 185-188 (EALA), and Glu193 each bind ATP. In terms of domain architecture, ATP-grasp spans 105-308 (VLAHEELGLP…EFALHARAIL (204 aa)). Glu266 and Glu279 together coordinate Mg(2+). N(1)-(5-phospho-beta-D-ribosyl)glycinamide-binding positions include Asp286, Lys361, and 368 to 369 (RR).

It belongs to the PurK/PurT family. As to quaternary structure, homodimer.

The enzyme catalyses N(1)-(5-phospho-beta-D-ribosyl)glycinamide + formate + ATP = N(2)-formyl-N(1)-(5-phospho-beta-D-ribosyl)glycinamide + ADP + phosphate + H(+). Its pathway is purine metabolism; IMP biosynthesis via de novo pathway; N(2)-formyl-N(1)-(5-phospho-D-ribosyl)glycinamide from N(1)-(5-phospho-D-ribosyl)glycinamide (formate route): step 1/1. Involved in the de novo purine biosynthesis. Catalyzes the transfer of formate to 5-phospho-ribosyl-glycinamide (GAR), producing 5-phospho-ribosyl-N-formylglycinamide (FGAR). Formate is provided by PurU via hydrolysis of 10-formyl-tetrahydrofolate. In Bifidobacterium adolescentis (strain ATCC 15703 / DSM 20083 / NCTC 11814 / E194a), this protein is Formate-dependent phosphoribosylglycinamide formyltransferase.